Consider the following 584-residue polypeptide: Cilia- and flagella-associated protein 184 (584 aa).

Composition is skewed to basic and acidic residues over residues 1–18, 42–57, and 67–82; these read MDSH…EEGL, PEPK…REPE, and SKAK…HVEV. The segment at 1–243 is disordered; sequence MDSHYGDIEG…ASTEEFEWTA (243 aa). Over residues 119–146 the composition is skewed to acidic residues; it reads DKDEDEDEDEDEDEDEDEDEDEDEDEGE. The span at 189–232 shows a compositional bias: basic and acidic residues; that stretch reads AKEKARESLKKRDSEEIEGTDRERHKSTEEQLHPGEAKEEEKQK. Coiled coils occupy residues 317-470 and 530-561; these read LAML…SNVQ and LLGK…KRHH.

It belongs to the CFAP184 family. As to quaternary structure, forms a complex with CFAP263; the interaction is required for functional activity in cilia.

Its subcellular location is the cell projection. The protein resides in the cilium. The protein localises to the cytoplasm. It is found in the cytoskeleton. It localises to the microtubule organizing center. Its subcellular location is the centrosome. Its function is as follows. In complex with CFAP263, acts as a regulator of ciliary beating that connects radial spoke 3 (RS3) to the inner dynein arm (IDA) and the nexin-dynein regulatory complex (N-DRC). The complex is positioned parallel to N-DRC and forms a connection between the arch at the base of RS3, the IDA tail and N-DRC. In Mus musculus (Mouse), this protein is Cilia- and flagella-associated protein 184 (Cfap184).